The chain runs to 474 residues: MLKVTVPSCPSSPCSSVTSSTENLVPDYWIDGSKRDPLSDFFEVESELGRGATSIVYRCKQKGTQKPYALKVLKKTVDKKIVRTEIGVLLRLSHPNIIKLKEIFETPTEISLVLELVTGGELFDRIVEKGYYSERDAADAVKQILEAVAYLHENGIVHRDLKPENLLYATPAPDAPLKIADFGLSKIVEHQVLMKTVCGTPGYCAPEILRGCAYGPEVDMWSVGIITYILLCGFEPFYDERGDQFMFRRILNCEYYFISPWWDEVSLNAKDLVKKLIVLDPKKRLTTFQALQHPWVTGKAANFVHMDTAQKKLQEFNARRKLKAAVKAVVASSRLGSASSSHTNIQESNKASSEAQPAQDGKDKTDPLENKMQAGDHEAAKAAADETMKLQSEEVEEEEGVKEEEEEEEEEEETSRMVPQEPEDRLETDDQEMKRNSEETLKSVEEEMDPKAEEEAAAVGLGVPPQQDAILPEY.

Phosphoserine; by autocatalysis occurs at positions 11 and 12. The 255-residue stretch at 42–296 (FEVESELGRG…TFQALQHPWV (255 aa)) folds into the Protein kinase domain. ATP-binding positions include 48–56 (LGRGATSIV) and lysine 71. O-linked (GlcNAc) threonine glycosylation occurs at threonine 53. A glycan (O-linked (GlcNAc) serine) is linked at serine 54. An O-linked (GlcNAc) serine glycan is attached at serine 133. Aspartate 160 serves as the catalytic Proton acceptor. Serine 185 is a glycosylation site (O-linked (GlcNAc) serine). A Phosphothreonine; by CaMKK1 and CaMKK2 modification is found at threonine 196. The autoinhibitory domain stretch occupies residues 297 to 336 (TGKAANFVHMDTAQKKLQEFNARRKLKAAVKAVVASSRLG). Residues 302–319 (NFVHMDTAQKKLQEFNAR) form a PP2A-binding region. The tract at residues 318–337 (ARRKLKAAVKAVVASSRLGS) is calmodulin-binding. Serine 332 bears the Phosphoserine; by autocatalysis mark. The segment at 336–474 (GSASSSHTNI…PQQDAILPEY (139 aa)) is disordered. Serine 337 is subject to Phosphoserine. Serine 340, serine 341, and serine 352 each carry an O-linked (GlcNAc) serine glycan. Over residues 342 to 356 (HTNIQESNKASSEAQ) the composition is skewed to polar residues. Basic and acidic residues predominate over residues 360–392 (DGKDKTDPLENKMQAGDHEAAKAAADETMKLQS). Acidic residues predominate over residues 393–413 (EEVEEEEGVKEEEEEEEEEEE). The segment covering 431 to 454 (QEMKRNSEETLKSVEEEMDPKAEE) has biased composition (basic and acidic residues). Residues serine 437 and serine 443 each carry the phosphoserine modification.

The protein belongs to the protein kinase superfamily. CAMK Ser/Thr protein kinase family. CaMK subfamily. In terms of assembly, monomer. Interacts with protein phosphatase 2A (PPP2CA/PPP2CB); the interaction is mutually exclusive with binding to Ca(2+)/calmodulin. In terms of processing, phosphorylated by CaMKK1 and CaMKK2 on Thr-196. Dephosphorylated by protein phosphatase 2A. Autophosphorylated on Ser-11 and Ser-12. Post-translationally, glycosylation at Ser-185 modulates the phosphorylation of CaMK4 at Thr-196 and negatively regulates its activity toward CREB1 in basal conditions and during early inomycin stimulation. The N-terminus of calspermin is blocked. As to expression, isoform 1 is expressed in brain and isoform 2 is testis specific.

Its subcellular location is the cytoplasm. The protein localises to the nucleus. It catalyses the reaction L-seryl-[protein] + ATP = O-phospho-L-seryl-[protein] + ADP + H(+). It carries out the reaction L-threonyl-[protein] + ATP = O-phospho-L-threonyl-[protein] + ADP + H(+). Activated by Ca(2+)/calmodulin. Binding of calmodulin results in conformational change that relieves intrasteric autoinhibition and allows phosphorylation of Thr-196 within the activation loop by CaMKK1 or CaMKK2. Phosphorylation of Thr-196 results in a 10-20-fold increase in total activity to generate Ca(2+)/calmodulin-independent activity. Autophosphorylation of the N-terminus Ser-11 and Ser-12 is required for full activation. Inactivated by protein phosphatase 2A (PPP2CA/PPP2CB) which dephosphorylates Thr-196, thereby terminating autonomous activity and helping to maintain the enzyme in its autoinhibited state. Its function is as follows. Calcium/calmodulin-dependent protein kinase that operates in the calcium-triggered CaMKK-CaMK4 signaling cascade and regulates, mainly by phosphorylation, the activity of several transcription activators, such as CREB1, MEF2D, JUN and RORA, which play pivotal roles in immune response, inflammation, and memory consolidation. In the thymus, regulates the CD4(+)/CD8(+) double positive thymocytes selection threshold during T-cell ontogeny. In CD4 memory T-cells, is required to link T-cell antigen receptor (TCR) signaling to the production of IL2, IFNG and IL4 (through the regulation of CREB and MEF2). Regulates the differentiation and survival phases of osteoclasts and dendritic cells (DCs). Mediates DCs survival by linking TLR4 and the regulation of temporal expression of BCL2. Phosphorylates the transcription activator CREB1 on 'Ser-133' in hippocampal neuron nuclei and contribute to memory consolidation and long term potentiation (LTP) in the hippocampus. Can activate the MAP kinases MAPK1/ERK2, MAPK8/JNK1 and MAPK14/p38 and stimulate transcription through the phosphorylation of ELK1 and ATF2. Can also phosphorylate in vitro CREBBP, PRM2, MEF2A and STMN1/OP18. In terms of biological role, heat-stable, acidic, calmodulin-binding protein. This is Calcium/calmodulin-dependent protein kinase type IV (Camk4) from Rattus norvegicus (Rat).